Consider the following 1091-residue polypeptide: Self-sufficient cytochrome P450 monooxygenase CYP505E1 (1091 aa).

Cysteine 433 lines the heme pocket. The Flavodoxin-like domain occupies 528–669; sequence ICFFYGSNSG…DLEAWEETSL (142 aa). Residues 534–538 and 613–645 contribute to the FMN site; these read SNSGT and VFGCGHHDWTQTFYRIPTLIDELMHKAGATRLA. Positions 707–935 constitute an FAD-binding FR-type domain; the sequence is KDLMEARVTT…RPAKEAFHLP (229 aa).

This sequence in the N-terminal section; belongs to the cytochrome P450 family. FAD serves as cofactor. Requires FMN as cofactor. It depends on heme as a cofactor.

The enzyme catalyses 2 oxidized [cytochrome P450] + NADPH = 2 reduced [cytochrome P450] + NADP(+) + H(+). It carries out the reaction an organic molecule + reduced [NADPH--hemoprotein reductase] + O2 = an alcohol + oxidized [NADPH--hemoprotein reductase] + H2O + H(+). The catalysed reaction is dodecanoate + reduced [NADPH--hemoprotein reductase] + O2 = 5-hydroxydodecanoate + oxidized [NADPH--hemoprotein reductase] + H2O + H(+). It catalyses the reaction tetradecanoate + reduced [NADPH--hemoprotein reductase] + O2 = 7-hydroxytetradecanoate + oxidized [NADPH--hemoprotein reductase] + H2O + H(+). The enzyme catalyses dodecan-1-ol + reduced [NADPH--hemoprotein reductase] + O2 = 1,5-dodecanediol + oxidized [NADPH--hemoprotein reductase] + H2O + H(+). It carries out the reaction dodecan-1-ol + reduced [NADPH--hemoprotein reductase] + O2 = 1,4-dodecanediol + oxidized [NADPH--hemoprotein reductase] + H2O + H(+). The catalysed reaction is dodecan-1-ol + reduced [NADPH--hemoprotein reductase] + O2 = 1,6-dodecanediol + oxidized [NADPH--hemoprotein reductase] + H2O + H(+). Its function is as follows. Self-sufficient cytochrome P450 monooxygenase that catalyzes the regioselective in-chain hydroxylation of alkanes, fatty alcohols, and fatty acids at the omega-7 position. Performs hydroxylation of C10-C16 n-alkanes and C12 and C14 fatty alcohols; and thereby enables the one step biocatalytic synthesis of rare alcohols such as 5-dodecanol and 7-tetradecanol. Converts 1-dodecanol into 1,5-dodecanediol as major product with very little sub-terminally hydroxylated products with the 1,4-dodecanediol and 1,6-dodecanediol more abundant. Converts dodecanoic acid to 5-hydroxydodecanoic acid which can be further converted into delta-dodecalactone by lactonization of the 5-hydroxy acid at low pH. Also gives sub-terminal hydroxylation of dodecanoic acid with 9-hydroxydodecanoic acid being the second most abundant product. This Aspergillus niger (strain ATCC MYA-4892 / CBS 513.88 / FGSC A1513) protein is Self-sufficient cytochrome P450 monooxygenase CYP505E1.